Reading from the N-terminus, the 490-residue chain is UDP-N-acetylmuramate--L-alanine ligase (490 aa).

ATP is bound at residue 130 to 136; that stretch reads GTHGKTT.

It belongs to the MurCDEF family.

It localises to the cytoplasm. The enzyme catalyses UDP-N-acetyl-alpha-D-muramate + L-alanine + ATP = UDP-N-acetyl-alpha-D-muramoyl-L-alanine + ADP + phosphate + H(+). It functions in the pathway cell wall biogenesis; peptidoglycan biosynthesis. In terms of biological role, cell wall formation. This Idiomarina loihiensis (strain ATCC BAA-735 / DSM 15497 / L2-TR) protein is UDP-N-acetylmuramate--L-alanine ligase.